A 501-amino-acid chain; its full sequence is Solute carrier family 2, facilitated glucose transporter member 5 (501 aa).

An N-acetylmethionine modification is found at Met1. The Cytoplasmic portion of the chain corresponds to 1 to 18 (MEQQDQSMKEGRLTLVLA). The chain crosses the membrane as a helical span at residues 19 to 39 (LATLIAAFGSSFQYGYNVAAV). Residue Tyr32 coordinates D-fructose. Topologically, residues 40 to 68 (NSPALLMQQFYNETYYGRTGEFMEDFPLT) are extracellular. An N-linked (GlcNAc...) asparagine glycan is attached at Asn51. A helical membrane pass occupies residues 69–91 (LLWSVTVSMFPFGGFIGSLLVGP). The Cytoplasmic segment spans residues 92–98 (LVNKFGR). Residues 99 to 119 (KGALLFNNIFSIVPAILMGCS) traverse the membrane as a helical segment. At 120–126 (RVATSFE) the chain is on the extracellular side. The chain crosses the membrane as a helical span at residues 127–149 (LIIISRLLVGICAGVSSNVVPMY). The Cytoplasmic portion of the chain corresponds to 150-161 (LGELAPKNLRGA). The helical transmembrane segment at 162-182 (LGVVPQLFITVGILVAQIFGL) threads the bilayer. Gln167 is a D-fructose binding site. Topologically, residues 183-192 (RNLLANVDGW) are extracellular. Residues 193–213 (PILLGLTGVPAALQLLLLPFF) form a helical membrane-spanning segment. The Cytoplasmic segment spans residues 214–277 (PESPRYLLIQ…LFRMRSLRWQ (64 aa)). The helical transmembrane segment at 278 to 298 (LLSIIVLMGGQQLSGVNAIYY) threads the bilayer. Residues Gln288 and 296 to 298 (IYY) contribute to the D-fructose site. At 299 to 313 (YADQIYLSAGVPEEH) the chain is on the extracellular side. A helical membrane pass occupies residues 314–334 (VQYVTAGTGAVNVVMTFCAVF). At 335-342 (VVELLGRR) the chain is on the cytoplasmic side. A helical transmembrane segment spans residues 343 to 363 (LLLLLGFSICLIACCVLTAAL). Over 364–371 (ALQDTVSW) the chain is Extracellular. The helical transmembrane segment at 372 to 394 (MPYISIVCVISYVIGHALGPSPI) threads the bilayer. His387 is a D-fructose binding site. The Cytoplasmic portion of the chain corresponds to 395-412 (PALLITEIFLQSSRPSAF). The chain crosses the membrane as a helical span at residues 413–433 (MVGGSVHWLSNFTVGLIFPFI). 419 to 420 (HW) provides a ligand contact to D-fructose. The Extracellular portion of the chain corresponds to 434 to 439 (QEGLGP). The chain crosses the membrane as a helical span at residues 440-460 (YSFIVFAVICLLTTIYIFLIV). Topologically, residues 461-501 (PETKAKTFIEINQIFTKMNKVSEVYPEKEELKELPPVTSEQ) are cytoplasmic.

Detected in skeletal muscle, and in jejunum brush border membrane and basolateral membrane (at protein level). Expressed in small intestine, and at much lower levels in kidney, skeletal muscle, and adipose tissue.

It is found in the apical cell membrane. Its subcellular location is the cell membrane. The protein localises to the sarcolemma. It catalyses the reaction D-fructose(out) = D-fructose(in). The uptake of 2-deoxyglucose is inhibited by cytochalasin B. Fructose transport is inhibited by the flavonoids epigallocatechin gallate and apigenin but not quercetin. Functionally, functions as a fructose transporter that has only low activity with other monosaccharides. Can mediate the uptake of 2-deoxyglucose, but with low efficiency. Essential for fructose uptake in the small intestine. Plays a role in the regulation of salt uptake and blood pressure in response to dietary fructose. Required for the development of high blood pressure in response to high dietary fructose intake. The protein is Solute carrier family 2, facilitated glucose transporter member 5 of Homo sapiens (Human).